Here is a 318-residue protein sequence, read N- to C-terminus: NADH-ubiquinone oxidoreductase chain 1 (318 aa).

The next 8 membrane-spanning stretches (helical) occupy residues 3–23, 69–89, 98–118, 135–155, 171–191, 217–237, 253–273, and 294–314; these read TMNLLLLIMSTLAAMAFLTLV, ILYITAPALAFSIALLLWTPL, FNLGLLFILATSSLTVYSILW, AVAQMISYEVTLSIILLSILL, HLWLILPSWPLAMMWFTSTLA, AGPFALFFMAEYMNIIMMNAL, ELFTTSFTIKTLLLTSLFLWI, and LPLTLALLMWSTSMPIAISSI.

Belongs to the complex I subunit 1 family. In terms of assembly, core subunit of respiratory chain NADH dehydrogenase (Complex I) which is composed of 45 different subunits.

The protein resides in the mitochondrion inner membrane. The enzyme catalyses a ubiquinone + NADH + 5 H(+)(in) = a ubiquinol + NAD(+) + 4 H(+)(out). Its function is as follows. Core subunit of the mitochondrial membrane respiratory chain NADH dehydrogenase (Complex I) which catalyzes electron transfer from NADH through the respiratory chain, using ubiquinone as an electron acceptor. Essential for the catalytic activity and assembly of complex I. The protein is NADH-ubiquinone oxidoreductase chain 1 (MT-ND1) of Papio hamadryas (Hamadryas baboon).